The chain runs to 287 residues: Protease HtpX (287 aa).

2 helical membrane passes run 4–24 (IFLL…VMSI) and 33–53 (SGLL…SLAI). H139 lines the Zn(2+) pocket. Residue E140 is part of the active site. A Zn(2+)-binding site is contributed by H143. The next 2 helical transmembrane spans lie at 154-174 (LIQG…AGII) and 195-215 (AVVF…VAYF). E220 is a binding site for Zn(2+).

The protein belongs to the peptidase M48B family. Zn(2+) is required as a cofactor.

Its subcellular location is the cell inner membrane. The sequence is that of Protease HtpX from Shewanella piezotolerans (strain WP3 / JCM 13877).